A 492-amino-acid chain; its full sequence is Heat shock factor protein 4 (492 aa).

A DNA-binding region spans residues 17–121 (VPAFLGKLWA…QLLERVRRKV (105 aa)). The hydrophobic repeat HR-A/B stretch occupies residues 129 to 203 (GRWRPEDLGR…GPLQAGPSNA (75 aa)). Positions 245–322 (LPETNLGLSP…ECDFCVTAPP (78 aa)) are interactions with DUSP26, MAPK1 and MAPK2. The tract at residues 246 to 285 (PETNLGLSPHRARGPIISDIPEDSPSPEGTRLSPSSDGRR) is disordered. K293 participates in a covalent cross-link: Glycyl lysine isopeptide (Lys-Gly) (interchain with G-Cter in SUMO). A Phosphoserine modification is found at S298. Residues 337-400 (GSFSPEGPRN…PAGPLDVLGP (64 aa)) are disordered. Residues 364–389 (LGLESGDRSPESLLPPMLLQPPQESV) are hydrophobic repeat HR-C. Residues 374 to 388 (ESLLPPMLLQPPQES) are compositionally biased toward low complexity.

The protein belongs to the HSF family. Homotrimer. Exhibits constitutive DNA binding and forms trimers even in the absence of stress. Interacts with ALKBH4, DUSP26, MAPK1, MAPK2, MAPK8 and MAP kinase p38. Post-translationally, phosphorylated mainly on serine residues. Phosphorylation on Ser-298 promotes sumoylation on Lys-293. In terms of processing, isoform HSF4B is constitutively sumoylated. Sumoylation represses the transcriptional activity and is promoted by phosphorylation on Ser-298. HSFA is not sumoylated. Expressed in heart, skeletal muscle, eye and brain, and at much lower levels in some other tissues.

Its subcellular location is the nucleus. Functionally, heat-shock transcription factor that specifically binds heat shock promoter elements (HSE). Required for denucleation and organelle rupture and degradation that occur during eye lens terminal differentiation, when fiber cells that compose the lens degrade all membrane-bound organelles in order to provide lens with transparency to allow the passage of light. In this process, may regulate denucleation of lens fiber cells in part by activating DNASE2B transcription. May be involved in DNA repair through the transcriptional regulation of RAD51. May up-regulate p53/TP53 protein in eye lens fiber cells, possibly through protein stabilization. In the eye lens, controls the expression of alpha-crystallin B chain/CRYAB and consequently may be involved in the regulation of lysosomal acidification. Transcriptional repressor. In terms of biological role, transcriptional activator. This is Heat shock factor protein 4 (HSF4) from Homo sapiens (Human).